A 321-amino-acid chain; its full sequence is GDP-L-fucose synthase (321 aa).

14 to 20 lines the NADP(+) pocket; it reads GGSGLVG. The Proton donor/acceptor role is filled by tyrosine 143. NADP(+) contacts are provided by residues lysine 147, 170–173, and histidine 186; that span reads PTNV. 4 residues coordinate substrate: lysine 194, tryptophan 208, arginine 215, and aspartate 277.

It belongs to the NAD(P)-dependent epimerase/dehydratase family. Fucose synthase subfamily. Homodimer.

The catalysed reaction is GDP-beta-L-fucose + NADP(+) = GDP-4-dehydro-alpha-D-rhamnose + NADPH + H(+). It functions in the pathway nucleotide-sugar biosynthesis; GDP-L-fucose biosynthesis via de novo pathway; GDP-L-fucose from GDP-alpha-D-mannose: step 2/2. Catalyzes the two-step NADP-dependent conversion of GDP-4-dehydro-6-deoxy-D-mannose to GDP-fucose, involving an epimerase and a reductase reaction. The protein is GDP-L-fucose synthase of Homo sapiens (Human).